Reading from the N-terminus, the 61-residue chain is Small ribosomal subunit protein uS14 (61 aa).

The Zn(2+) site is built by cysteine 24, cysteine 27, cysteine 40, and cysteine 43.

It belongs to the universal ribosomal protein uS14 family. Zinc-binding uS14 subfamily. Part of the 30S ribosomal subunit. Contacts proteins S3 and S10. Zn(2+) is required as a cofactor.

Its function is as follows. Binds 16S rRNA, required for the assembly of 30S particles and may also be responsible for determining the conformation of the 16S rRNA at the A site. The polypeptide is Small ribosomal subunit protein uS14 (Maridesulfovibrio salexigens (strain ATCC 14822 / DSM 2638 / NCIMB 8403 / VKM B-1763) (Desulfovibrio salexigens)).